The primary structure comprises 160 residues: Cytochrome b6-f complex subunit 4 (160 aa).

A run of 3 helical transmembrane segments spans residues 36 to 56 (LLYI…GLAV), 95 to 115 (LLGV…PFLE), and 131 to 151 (TVFL…TLPI).

This sequence belongs to the cytochrome b family. PetD subfamily. The 4 large subunits of the cytochrome b6-f complex are cytochrome b6, subunit IV (17 kDa polypeptide, petD), cytochrome f and the Rieske protein, while the 4 small subunits are petG, petL, petM and petN. The complex functions as a dimer.

The protein resides in the plastid. Its subcellular location is the chloroplast thylakoid membrane. Its function is as follows. Component of the cytochrome b6-f complex, which mediates electron transfer between photosystem II (PSII) and photosystem I (PSI), cyclic electron flow around PSI, and state transitions. The sequence is that of Cytochrome b6-f complex subunit 4 from Solanum tuberosum (Potato).